The primary structure comprises 497 residues: Bloodstream-specific protein 2 (497 aa).

An N-terminal signal peptide occupies residues 1-14 (MRAIFLVALALATM). The Thioredoxin 1 domain occupies 15-124 (RESTAESLKL…IIKYIKANVG (110 aa)). N30 carries N-linked (GlcNAc...) asparagine glycosylation. C48 and C51 are joined by a disulfide. N-linked (GlcNAc...) asparagine glycans are attached at residues N63, N85, N153, N154, N250, and N278. Residues 334 to 455 (EPTIKSLPVP…VYEFVRKHVT (122 aa)) form the Thioredoxin 2 domain. Residues C378 and C381 each act as nucleophile in the active site. A disulfide bond links C378 and C381. N413, N465, N476, N482, N485, and N488 each carry an N-linked (GlcNAc...) asparagine glycan. The segment at 461 to 497 (EKPANVTEEKKSEEENKSSKSNESNDSNESNVDKQDL) is disordered. Basic and acidic residues predominate over residues 467-480 (TEEKKSEEENKSSK). The segment covering 481–490 (SNESNDSNES) has biased composition (low complexity).

The protein belongs to the protein disulfide isomerase family.

This chain is Bloodstream-specific protein 2 (BS2), found in Trypanosoma brucei brucei.